A 632-amino-acid chain; its full sequence is tRNA uridine 5-carboxymethylaminomethyl modification enzyme MnmG (632 aa).

Residues 13-18 (GGGHAG), Val125, and Ser180 contribute to the FAD site. 273–287 (GPRYCPSIEDKVMRF) is an NAD(+) binding site. Gln370 contacts FAD.

Belongs to the MnmG family. As to quaternary structure, homodimer. Heterotetramer of two MnmE and two MnmG subunits. The cofactor is FAD.

The protein localises to the cytoplasm. Its function is as follows. NAD-binding protein involved in the addition of a carboxymethylaminomethyl (cmnm) group at the wobble position (U34) of certain tRNAs, forming tRNA-cmnm(5)s(2)U34. The protein is tRNA uridine 5-carboxymethylaminomethyl modification enzyme MnmG of Vibrio vulnificus (strain CMCP6).